The chain runs to 212 residues: Pyridoxine/pyridoxamine 5'-phosphate oxidase (212 aa).

FMN-binding positions include Arg-59–Lys-64, Tyr-74–Ser-75, Lys-81, and Gln-103. Lys-64 is a substrate binding site. Substrate-binding residues include Tyr-121 and Arg-125. FMN-binding positions include Gln-138–Ser-139 and Trp-183. Arg-189–His-191 contributes to the substrate binding site. Arg-193 lines the FMN pocket.

This sequence belongs to the pyridoxamine 5'-phosphate oxidase family. Homodimer. The cofactor is FMN.

It catalyses the reaction pyridoxamine 5'-phosphate + O2 + H2O = pyridoxal 5'-phosphate + H2O2 + NH4(+). The catalysed reaction is pyridoxine 5'-phosphate + O2 = pyridoxal 5'-phosphate + H2O2. The protein operates within cofactor metabolism; pyridoxal 5'-phosphate salvage; pyridoxal 5'-phosphate from pyridoxamine 5'-phosphate: step 1/1. Its pathway is cofactor metabolism; pyridoxal 5'-phosphate salvage; pyridoxal 5'-phosphate from pyridoxine 5'-phosphate: step 1/1. Its function is as follows. Catalyzes the oxidation of either pyridoxine 5'-phosphate (PNP) or pyridoxamine 5'-phosphate (PMP) into pyridoxal 5'-phosphate (PLP). The protein is Pyridoxine/pyridoxamine 5'-phosphate oxidase of Rhodopseudomonas palustris (strain BisB5).